Reading from the N-terminus, the 354-residue chain is MQFSPVVASPKLLLQLCISTLHCIMASIISTVCYWTAGACKGTTSPVPPVDSNLDQRKVQNAMTPTSVNYHFTRKCNYKCGFCFHTAKTSFVLPLEEAKRGLKLLKESGMEKINFSGGEPFLHEKGEFLGKLVQFCKLDLQLPSVSIVSNGSMIKEKWFQKYGDYLDILAISCDSFDEATNQLIGRTQGRKSHVDNLHKIRNWCQQYKVAFKINSVINTFNMDEDMTEPITQLNPVRWKVFQCLLIDGENAGEEALREAERFVISDQLFQEFLDRHSSISCLVPESNEKMRNSYLILDEYMRFLDCRAGRKDPSKSILDVGVKDAISFSGFDEKMFLKRGGKYVWSKANMKLQW.

The 221-residue stretch at 62–282 (AMTPTSVNYH…LDRHSSISCL (221 aa)) folds into the Radical SAM core domain. The [4Fe-4S] cluster site is built by Cys-76, Cys-80, and Cys-83.

This sequence belongs to the radical SAM superfamily. RSAD2 family. Requires [4Fe-4S] cluster as cofactor. As to expression, constitutively expressed in spleen, head kidney and trunk kidney. Following viral infection, detected in most organs including liver, gill, intestine, heart, muscle and brain.

It is found in the endoplasmic reticulum membrane. Functionally, interferon-inducible iron-sulfur (4FE-4S) cluster-binding antiviral protein which plays a major role in the cell antiviral state induced by type I and type II interferon. The chain is S-adenosylmethionine-dependent nucleotide dehydratase RSAD2 from Siniperca chuatsi (Mandarin fish).